The sequence spans 335 residues: Vitamin B12 import system permease protein BtuC (335 aa).

9 consecutive transmembrane segments (helical) span residues 22 to 42, 67 to 87, 94 to 114, 117 to 137, 153 to 173, 200 to 220, 243 to 263, 281 to 301, and 308 to 328; these read LLLLTLGVAVAFVFSLSAGDV, LAVMLVGASLAVAGAVMQSLF, PGLLGVANGAGVALVLTVLLG, LLPVAFMSLSAIAGALVMTFL, LLVGVALGIVCSAVMTWAVYF, LVLALLPVLLWLCCQGKALNF, VLAIGWLVGVSVALAGVIGFV, YLLPGCALAGAGVLLAADVVA, and AELPIGVVTATLGAPLFIWLL.

The protein belongs to the binding-protein-dependent transport system permease family. FecCD subfamily. In terms of assembly, the complex is composed of two ATP-binding proteins (BtuD), two transmembrane proteins (BtuC) and a solute-binding protein (BtuF).

The protein localises to the cell inner membrane. Functionally, part of the ABC transporter complex BtuCDF involved in vitamin B12 import. Involved in the translocation of the substrate across the membrane. This chain is Vitamin B12 import system permease protein BtuC, found in Serratia proteamaculans (strain 568).